Reading from the N-terminus, the 313-residue chain is 4-diphosphocytidyl-2-C-methyl-D-erythritol kinase (313 aa).

Residue Lys-10 is part of the active site. Pro-95 to Ser-105 is a binding site for ATP. The active site involves Asp-136. Residues His-289 to Thr-313 are disordered. Positions Val-292–Arg-304 are enriched in low complexity.

This sequence belongs to the GHMP kinase family. IspE subfamily.

The enzyme catalyses 4-CDP-2-C-methyl-D-erythritol + ATP = 4-CDP-2-C-methyl-D-erythritol 2-phosphate + ADP + H(+). It functions in the pathway isoprenoid biosynthesis; isopentenyl diphosphate biosynthesis via DXP pathway; isopentenyl diphosphate from 1-deoxy-D-xylulose 5-phosphate: step 3/6. In terms of biological role, catalyzes the phosphorylation of the position 2 hydroxy group of 4-diphosphocytidyl-2C-methyl-D-erythritol. This Anaeromyxobacter sp. (strain K) protein is 4-diphosphocytidyl-2-C-methyl-D-erythritol kinase.